A 36-amino-acid chain; its full sequence is Avenin-A (36 aa).

This sequence belongs to the gliadin/glutenin family. Monomer.

The protein resides in the vacuole. It is found in the aleurone grain. Functionally, seed storage protein. Serves as a source of nitrogen, carbon, and sulfur for the young developing seedling. In Avena sativa (Oat), this protein is Avenin-A.